The primary structure comprises 558 residues: Rhamnogalacturonase B (558 aa).

Residues Met1–Ala21 form the signal peptide. A disulfide bond links Cys42 and Cys68. Residue Asn145 is glycosylated (N-linked (GlcNAc...) asparagine). Asp219 acts as the Proton donor in catalysis. Cys221 and Cys238 form a disulfide bridge. N-linked (GlcNAc...) asparagine glycosylation is found at Asn239 and Asn254. His294 is an active-site residue. An N-linked (GlcNAc...) asparagine glycan is attached at Asn321. 2 disulfides stabilise this stretch: Cys344–Cys350 and Cys372–Cys381. Residues Val503 to Pro526 show a composition bias toward low complexity. A disordered region spans residues Val503 to Val558.

This sequence belongs to the glycosyl hydrolase 28 family.

Its subcellular location is the secreted. The catalysed reaction is Endohydrolysis of alpha-D-GalA-(1-&gt;2)-alpha-L-Rha glycosidic bond in the rhamnogalacturonan I backbone with initial inversion of anomeric configuration releasing oligosaccharides with beta-D-GalA at the reducing end.. In terms of biological role, pectinolytic enzymes consist of four classes of enzymes: pectine lyase, polygalacturonase, pectin methylesterase and rhamnogalacturonase. Hydrolyzes alpha-D-galacturonopyranosyl-(1,2)-alpha-L-rhamnopyranosyl linkages in the backbone of the hairy regions of pectins. The protein is Rhamnogalacturonase B (rhgB) of Aspergillus niger.